The chain runs to 277 residues: Thymidylate synthase (277 aa).

Arg21 provides a ligand contact to dUMP. Residue His51 coordinates (6R)-5,10-methylene-5,6,7,8-tetrahydrofolate. 126 to 127 is a binding site for dUMP; that stretch reads RR. Cys159 serves as the catalytic Nucleophile. DUMP-binding positions include 179-182, Asn190, and 220-222; these read RSAD and HLY. Residue Asp182 participates in (6R)-5,10-methylene-5,6,7,8-tetrahydrofolate binding. Residue Ser276 participates in (6R)-5,10-methylene-5,6,7,8-tetrahydrofolate binding.

It belongs to the thymidylate synthase family. Bacterial-type ThyA subfamily. In terms of assembly, homodimer.

The protein resides in the cytoplasm. It carries out the reaction dUMP + (6R)-5,10-methylene-5,6,7,8-tetrahydrofolate = 7,8-dihydrofolate + dTMP. Its pathway is pyrimidine metabolism; dTTP biosynthesis. Functionally, catalyzes the reductive methylation of 2'-deoxyuridine-5'-monophosphate (dUMP) to 2'-deoxythymidine-5'-monophosphate (dTMP) while utilizing 5,10-methylenetetrahydrofolate (mTHF) as the methyl donor and reductant in the reaction, yielding dihydrofolate (DHF) as a by-product. This enzymatic reaction provides an intracellular de novo source of dTMP, an essential precursor for DNA biosynthesis. This chain is Thymidylate synthase, found in Saccharophagus degradans (strain 2-40 / ATCC 43961 / DSM 17024).